Consider the following 248-residue polypeptide: MSAMEKLRLGVNIDHVATLRNARGGALPDPVRAAVLAEQAGADGITAHLREDRRHIRDADIAAIMEAITIPLNFEMAATDEMQEIALGHLPHAACIVPERREERTTEGGLEVAGDDNRLAQYIAPLKDAGIRVSLFIAAERSQIEAAARIGAPVIELHTGAYCDYDAEGDVAARDAELARLIAGAKLGVELGLEVHMGHGLNYDTVAPIAALPEVAELNIGHFLIGESIFVGLEAAMTEMRARMDAAR.

Asparagine 12 lines the 3-amino-2-oxopropyl phosphate pocket. Residue 14-15 (DH) participates in 1-deoxy-D-xylulose 5-phosphate binding. Arginine 23 contacts 3-amino-2-oxopropyl phosphate. The active-site Proton acceptor is histidine 48. 1-deoxy-D-xylulose 5-phosphate is bound by residues arginine 50 and histidine 55. Glutamate 75 (proton acceptor) is an active-site residue. Threonine 105 contacts 1-deoxy-D-xylulose 5-phosphate. Histidine 199 serves as the catalytic Proton donor. 3-amino-2-oxopropyl phosphate-binding positions include glycine 200 and 221–222 (GH).

It belongs to the PNP synthase family. In terms of assembly, homooctamer; tetramer of dimers.

The protein localises to the cytoplasm. The enzyme catalyses 3-amino-2-oxopropyl phosphate + 1-deoxy-D-xylulose 5-phosphate = pyridoxine 5'-phosphate + phosphate + 2 H2O + H(+). It functions in the pathway cofactor biosynthesis; pyridoxine 5'-phosphate biosynthesis; pyridoxine 5'-phosphate from D-erythrose 4-phosphate: step 5/5. Catalyzes the complicated ring closure reaction between the two acyclic compounds 1-deoxy-D-xylulose-5-phosphate (DXP) and 3-amino-2-oxopropyl phosphate (1-amino-acetone-3-phosphate or AAP) to form pyridoxine 5'-phosphate (PNP) and inorganic phosphate. This Jannaschia sp. (strain CCS1) protein is Pyridoxine 5'-phosphate synthase.